Here is a 144-residue protein sequence, read N- to C-terminus: TSC22 domain family protein 1 (144 aa).

Residues 77 to 98 (LKEQIKELIEKNSQLEQENNLL) form a leucine-zipper region. Positions 109–144 (QFQAQLQTGSPPATTQPQGSTQPPAQPASQGSGPTA) are disordered.

The protein belongs to the TSC-22/Dip/Bun family. Forms homodimers. Forms a heterodimer with TSC22D4/THG1. Interacts with histone H1-2. Interacts with GNL3.

Its subcellular location is the cytoplasm. The protein resides in the nucleus. It localises to the mitochondrion. Its function is as follows. Transcriptional repressor. Plays a role in the repression of hematopoietic precursor cell growth. Promotes IL2 deprivation-induced apoptosis in T-lymphocytes, via repression of TSC22D3/GILZ transcription and activation of the caspase cascade. Positively regulates cell death in response to TGFB3 during mammary gland involution. The chain is TSC22 domain family protein 1 from Bathyergus suillus (Cape dune mole rat).